Here is a 342-residue protein sequence, read N- to C-terminus: Pyrophosphate--fructose 6-phosphate 1-phosphotransferase (342 aa).

Residue G10 participates in diphosphate binding. A Mg(2+)-binding site is contributed by E103. Substrate-binding positions include T126 to D128, R163, M170 to R172, E222, R266, and H272 to R275. The active-site Proton acceptor is the D128.

Belongs to the phosphofructokinase type A (PFKA) family. Mixed-substrate PFK group III subfamily. Homodimer or homotetramer. Mg(2+) is required as a cofactor.

The protein localises to the cytoplasm. It carries out the reaction beta-D-fructose 6-phosphate + diphosphate = beta-D-fructose 1,6-bisphosphate + phosphate + H(+). It participates in carbohydrate degradation; glycolysis; D-glyceraldehyde 3-phosphate and glycerone phosphate from D-glucose: step 3/4. Non-allosteric. In terms of biological role, catalyzes the phosphorylation of D-fructose 6-phosphate, the first committing step of glycolysis. Uses inorganic phosphate (PPi) as phosphoryl donor instead of ATP like common ATP-dependent phosphofructokinases (ATP-PFKs), which renders the reaction reversible, and can thus function both in glycolysis and gluconeogenesis. Consistently, PPi-PFK can replace the enzymes of both the forward (ATP-PFK) and reverse (fructose-bisphosphatase (FBPase)) reactions. This Streptomyces coelicolor (strain ATCC BAA-471 / A3(2) / M145) protein is Pyrophosphate--fructose 6-phosphate 1-phosphotransferase.